A 1940-amino-acid polypeptide reads, in one-letter code: MSSDTEMEVFGIAAPFLRKSEKERIEAQNQPFDAKTYCFVVDSKEEYVKGKIKSSQDGKVTVETEDSRTLVVKPEDVYAMNPPKFDKIEDMAMLTHLNEPAVLYNLKDRYTSWMIYTYSGLFCVTVNPYKWLPVYNPEVVDGYRGKKRQEAPPHIFSISDNAYQFMLTDRENQSILITGESGAGKTVNTKRVIQYFATIAATGDLAKKKDSKMKGTLEDQIISANPLLEAFGNAKTVRNDNSSRFGKFIRIHFGTTGKLASADIETYLLEKSRVTFQLKAERSYHIFYQILSNKKPELIELLLITTNPYDYPFISQGEILVASIDDAEELLATDSAIDILGFTPEEKSGLYKLTGAVMHYGNMKFKQKQREEQAEPDGTEVADKTAYLMGLNSSDLLKALCFPRVKVGNEYVTKGQTVDQVHHAVNALSKSVYEKLFLWMVTRINQQLDTKLPRQHFIGVLDIAGFEIFEYNSLEQLCINFTNEKLQQFFNHHMFVLEQEEYKKEGIEWTFIDFGMDLAACIELIEKPMGIFSILEEECMFPKATDTSFKNKLYDQHLGKSNNFQKPKVVKGKAEAHFSLVHYAGTVDYSVSGWLEKNKDPLNETVVGLYQKSSNRLLAHLYATFATTDADGGKKKVAKKKGSSFQTVSALFRENLNKLMSNLRTTHPHFVRCIIPNETKTPGAMEHSLVLHQLRCNGVLEGIRICRKGFPNRILYGDFKQRYRVLNASAIPEGQFIDSKKACEKLLASIDIDHTQYKFGHTKVFFKAGLLGTLEEMRDERLAKLITRTQAVCRGFLMRVEFQKMMQRRESIFCIQYNIRAFMNVKHWPWMKLFFKIKPLLKSAETEKEMATMKEEFQKTKDELAKSEAKRKELEEKLVTLVQEKNDLQLQVQAESENLLDAEERCDQLIKAKFQLEAKIKEVTERAEDEEEINAELTAKKRKLEDECSELKKDIDDLELTLAKVEKEKHATENKVKNLTEELAGLDETIAKLTREKKALQEAHQQTLDDLQAEEDKVNSLSKLKSKLEQQVDDLESSLEQEKKLRVDLERNKRKLEGDLKLAQESILDLENDKQQLDERLKKKDFEYSQLQSKVEDEQTLSLQLQKKIKELQARIEELEEEIEAERATRAKTEKQRSDYARELEELSERLEEAGGVTSTQIELNKKREAEFLKLRRDLEEATLQHEATVATLRKKHADSAAELAEQIDNLQRVKQKLEKEKSEFKLEIDDLSSSVESVSKSKANLEKICRTLEDQLSEARGKNEEMQRSLSELTTQKSRLQTEAGELSRQLEEKESIVSQLSRSKQAFTQQIEELKRQLEEENKAKNALAHALQSSRHDCDLLREQYEEEQEGKAELQRALSKANSEVAQWRTKYETDAIQRTEELEEAKKKLAQRLQDSEEQVEAVNAKCASLEKTKQRLQGEVEDLMVDVERANSLAAALDKKQRNFDKVLAEWKTKCEESQAELEAALKESRSLSTELFKLKNAYEEALDQLETVKRENKNLEQEIADLTEQIAENGKSIHELEKSRKQMELEKADIQMALEEAEAALEHEEAKILRIQLELTQVKSEIDRKIAEKDEEIEQLKRNYQRTVETMQGALDAEVRSRNEAIRLKKKMEGDLNEIEIQLSHANRQAAETIKHLRSVQGQLKDTQLHLDDALRGQEDLKEQLAIVERRANLLQAEVEELRATLEQTERARKLAEQELLDSNERVQLLHTQNTSLIHTKKKLETDLTQLQSEVEDACRDARNAEEKAKKAITDAAMMAEELKKEQDTSAHLERMKKNLEQTVKDLQHRLDEAEQLALKGGKKQIQKLETRIRELEFELEGEQKRNTESVKGLRKYERRVKELTYQSEEDRKNVLRLQDLVDKLQVKVKSYKRQAEEADEQANAHLTKFRKAQHELEEAEERADIAESQVNKLRAKTRDFTSSRMVVHESEE.

The region spanning 33–82 (DAKTYCFVVDSKEEYVKGKIKSSQDGKVTVETEDSRTLVVKPEDVYAMNP) is the Myosin N-terminal SH3-like domain. One can recognise a Myosin motor domain in the interval 86 to 779 (DKIEDMAMLT…LLGTLEEMRD (694 aa)). The residue at position 130 (Lys-130) is an N6,N6,N6-trimethyllysine. 179 to 186 (GESGAGKT) provides a ligand contact to ATP. 2 actin-binding regions span residues 656-678 (LNKL…IPNE) and 758-772 (KFGH…GLLG). The region spanning 782-811 (LAKLITRTQAVCRGFLMRVEFQKMMQRRES) is the IQ domain. A coiled-coil region spans residues 841 to 1928 (LKSAETEKEM…NKLRAKTRDF (1088 aa)). Residues 1260–1289 (ARGKNEEMQRSLSELTTQKSRLQTEAGELS) are disordered. Residues 1269–1282 (RSLSELTTQKSRLQ) are compositionally biased toward polar residues.

Belongs to the TRAFAC class myosin-kinesin ATPase superfamily. Myosin family. As to quaternary structure, muscle myosin is a hexameric protein that consists of 2 heavy chain subunits (MHC), 2 alkali light chain subunits (MLC) and 2 regulatory light chain subunits (MLC-2).

The protein localises to the cytoplasm. The protein resides in the myofibril. In terms of biological role, muscle contraction. The chain is Myosin-3 (Myh3) from Mus musculus (Mouse).